Consider the following 69-residue polypeptide: Conopeptide Y-Pl1 (69 aa).

Positions 1 to 20 (MSKLGVVLFVFLLLLPLAAP) are cleaved as a signal peptide. Residues 21-69 (QPVGDQPADQPADRNAEARARFLHPFQYYTLYRYLTRFLHRYPIYYIRY) constitute a propeptide that is removed on maturation.

It belongs to the conotoxin M superfamily. Conopeptide Y family. As to expression, expressed by the venom duct.

It is found in the secreted. Functionally, tyrosine-rich conopeptide that targets several channels/receptors that are expressed in Xenopus oocytes. These targets are the voltage-gated potassium channels Kv1.6/KCNA6 (IC(50) is 170 nM) and Kv1.2/KCNA2 (IC(50) is 2.0 uM), Nav1.2/SCN2A (30% of inhibition), and N-methyl-D-aspartate (NMDA) receptor (GRIN1/GRIN2A/GRIN3B and GRIN1/GRIN2B/GRIN3B) (15% of inhibition). In vivo, causes the marine worm N.virens to move very slowly in contrast to control worms, and causes seizures (at 5 nmol) and death (20 nmol) to mice when intracranially injected. The chain is Conopeptide Y-Pl1 from Conus planorbis (Planorbis cone).